Reading from the N-terminus, the 149-residue chain is Large ribosomal subunit protein bL20m (149 aa).

The N-terminal 9 residues, 1–9, are a transit peptide targeting the mitochondrion; the sequence is MVFLSLSRW.

The protein belongs to the bacterial ribosomal protein bL20 family. As to quaternary structure, component of the mitochondrial ribosome large subunit (39S) which comprises a 16S rRNA and about 50 distinct proteins.

It localises to the mitochondrion. The protein is Large ribosomal subunit protein bL20m (mrpl20) of Xenopus laevis (African clawed frog).